The following is a 316-amino-acid chain: Lipoyl synthase (316 aa).

The span at 1–15 (MKARNESMSKGEYKT) shows a compositional bias: basic and acidic residues. The disordered stretch occupies residues 1-33 (MKARNESMSKGEYKTKSLKNRPDPTQPKLKKPS). The [4Fe-4S] cluster site is built by Cys-64, Cys-69, Cys-75, Cys-90, Cys-94, Cys-97, and Ser-304. The 218-residue stretch at 76-293 (FGHGTATFMI…EQAGMEMGFT (218 aa)) folds into the Radical SAM core domain.

It belongs to the radical SAM superfamily. Lipoyl synthase family. It depends on [4Fe-4S] cluster as a cofactor.

It is found in the cytoplasm. It carries out the reaction [[Fe-S] cluster scaffold protein carrying a second [4Fe-4S](2+) cluster] + N(6)-octanoyl-L-lysyl-[protein] + 2 oxidized [2Fe-2S]-[ferredoxin] + 2 S-adenosyl-L-methionine + 4 H(+) = [[Fe-S] cluster scaffold protein] + N(6)-[(R)-dihydrolipoyl]-L-lysyl-[protein] + 4 Fe(3+) + 2 hydrogen sulfide + 2 5'-deoxyadenosine + 2 L-methionine + 2 reduced [2Fe-2S]-[ferredoxin]. The protein operates within protein modification; protein lipoylation via endogenous pathway; protein N(6)-(lipoyl)lysine from octanoyl-[acyl-carrier-protein]: step 2/2. Functionally, catalyzes the radical-mediated insertion of two sulfur atoms into the C-6 and C-8 positions of the octanoyl moiety bound to the lipoyl domains of lipoate-dependent enzymes, thereby converting the octanoylated domains into lipoylated derivatives. The polypeptide is Lipoyl synthase (Hydrogenovibrio crunogenus (strain DSM 25203 / XCL-2) (Thiomicrospira crunogena)).